The chain runs to 236 residues: Ureidoacrylate amidohydrolase RutB (236 aa).

The active-site Proton acceptor is aspartate 24. Lysine 133 is an active-site residue. The Nucleophile role is filled by cysteine 166.

Belongs to the isochorismatase family. RutB subfamily.

It carries out the reaction (Z)-3-ureidoacrylate + H2O + H(+) = (Z)-3-aminoacrylate + NH4(+) + CO2. The catalysed reaction is (Z)-3-ureidoacrylate + H2O = (Z)-3-aminoacrylate + carbamate + H(+). It catalyses the reaction (Z)-2-methylureidoacrylate + H2O + H(+) = (Z)-2-methylaminoacrylate + NH4(+) + CO2. Hydrolyzes ureidoacrylate to form aminoacrylate and carbamate. The carbamate hydrolyzes spontaneously, thereby releasing one of the nitrogen atoms of the pyrimidine ring as ammonia and one of its carbon atoms as CO2. The sequence is that of Ureidoacrylate amidohydrolase RutB from Klebsiella variicola (strain At-22).